The following is a 136-amino-acid chain: Psoriasis susceptibility 1 candidate gene 2 protein homolog (136 aa).

An N-terminal signal peptide occupies residues 1–22 (MILNWKLLGILVLCLHTRGISG). The interval 20-136 (ISGSEDHPSH…DLDPPREEYR (117 aa)) is disordered. Over residues 23-33 (SEDHPSHPPAE) the composition is skewed to basic and acidic residues. 2 stretches are compositionally biased toward pro residues: residues 44–74 (PQGP…PPWR) and 83–116 (PPEP…PPAP). Basic and acidic residues predominate over residues 117-136 (EVDHRPQEEPDLDPPREEYR).

The protein localises to the secreted. This is Psoriasis susceptibility 1 candidate gene 2 protein homolog (PSORS1C2) from Pan troglodytes (Chimpanzee).